Here is a 363-residue protein sequence, read N- to C-terminus: D-alanine--D-alanine ligase (363 aa).

Residues 146-352 form the ATP-grasp domain; the sequence is KLCAADAGVA…FTALIDKLLH (207 aa). 179 to 234 contacts ATP; that stretch reads DSTFGYPLFVKPASLGSSVGISKVHLPAALPEALKVACSYDRKILVEAAVSGKEIE. Mg(2+) is bound by residues Asp305, Glu319, and Asn321.

It belongs to the D-alanine--D-alanine ligase family. Mg(2+) serves as cofactor. Requires Mn(2+) as cofactor.

The protein localises to the cytoplasm. It catalyses the reaction 2 D-alanine + ATP = D-alanyl-D-alanine + ADP + phosphate + H(+). It functions in the pathway cell wall biogenesis; peptidoglycan biosynthesis. In terms of biological role, cell wall formation. The polypeptide is D-alanine--D-alanine ligase (Chlorobium limicola (strain DSM 245 / NBRC 103803 / 6330)).